The primary structure comprises 162 residues: Serine-protein kinase RsbW (162 aa).

Belongs to the anti-sigma-factor family.

The enzyme catalyses L-seryl-[protein] + ATP = O-phospho-L-seryl-[protein] + ADP + H(+). It carries out the reaction L-threonyl-[protein] + ATP = O-phospho-L-threonyl-[protein] + ADP + H(+). Its function is as follows. Negative regulator of sigma-B activity. Phosphorylates and inactivates its specific antagonist protein, RsbV. Upon phosphorylation of RsbV, RsbW is released and binds to sigma-B, thereby blocking its ability to form an RNA polymerase holoenzyme (E-sigma-B). This chain is Serine-protein kinase RsbW, found in Halalkalibacterium halodurans (strain ATCC BAA-125 / DSM 18197 / FERM 7344 / JCM 9153 / C-125) (Bacillus halodurans).